The following is a 116-amino-acid chain: Large ribosomal subunit protein bL17 (116 aa).

Belongs to the bacterial ribosomal protein bL17 family. In terms of assembly, part of the 50S ribosomal subunit. Contacts protein L32.

The chain is Large ribosomal subunit protein bL17 from Aliarcobacter butzleri (strain RM4018) (Arcobacter butzleri).